The sequence spans 280 residues: 3-deoxy-manno-octulosonate cytidylyltransferase (280 aa).

It belongs to the KdsB family.

The protein resides in the cytoplasm. The catalysed reaction is 3-deoxy-alpha-D-manno-oct-2-ulosonate + CTP = CMP-3-deoxy-beta-D-manno-octulosonate + diphosphate. It functions in the pathway nucleotide-sugar biosynthesis; CMP-3-deoxy-D-manno-octulosonate biosynthesis; CMP-3-deoxy-D-manno-octulosonate from 3-deoxy-D-manno-octulosonate and CTP: step 1/1. It participates in bacterial outer membrane biogenesis; lipopolysaccharide biosynthesis. Activates KDO (a required 8-carbon sugar) for incorporation into bacterial lipopolysaccharide in Gram-negative bacteria. This is 3-deoxy-manno-octulosonate cytidylyltransferase from Colwellia psychrerythraea (strain 34H / ATCC BAA-681) (Vibrio psychroerythus).